The primary structure comprises 752 residues: Photosystem I P700 chlorophyll a apoprotein A1 (752 aa).

8 consecutive transmembrane segments (helical) span residues 73–96 (IFSAHFGQLAVIFLWLSGMYFHGA), 159–182 (LYCTAIGGLGMAALMLFAGWFHYH), 198–222 (MNHHLAGLLGLGCLGWAGHQIHLSL), 294–312 (TAHHHLALAVLFLAAGHMY), 349–372 (WHAQLAINLAMMGSLSIIVAHHMY), 388–414 (LSLFTHHMWIGGFCVVGAGAHASIFMV), 436–458 (AIVSHLNWVCIFLGFHSFGLYIH), and 533–551 (FMVHHIHAFTIHVTVLILV). C575 and C584 together coordinate [4Fe-4S] cluster. 2 helical membrane-spanning segments follow: residues 591–612 (HVFLGLFWMYNSLSVAIFHFSW) and 666–688 (LSAYGLIFLAAHFVWAFSLMFLF). H677 lines the chlorophyll a' pocket. Chlorophyll a contacts are provided by M685 and Y693. W694 contributes to the phylloquinone binding site. The chain crosses the membrane as a helical span at residues 726–746 (AVGVAHYLLGGIGTTWAFFLA).

Belongs to the PsaA/PsaB family. As to quaternary structure, the PsaA/B heterodimer binds the P700 chlorophyll special pair and subsequent electron acceptors. PSI consists of a core antenna complex that captures photons, and an electron transfer chain that converts photonic excitation into a charge separation. The eukaryotic PSI reaction center is composed of at least 11 subunits. P700 is a chlorophyll a/chlorophyll a' dimer, A0 is one or more chlorophyll a, A1 is one or both phylloquinones and FX is a shared 4Fe-4S iron-sulfur center. serves as cofactor.

It is found in the plastid. The protein localises to the chloroplast thylakoid membrane. The enzyme catalyses reduced [plastocyanin] + hnu + oxidized [2Fe-2S]-[ferredoxin] = oxidized [plastocyanin] + reduced [2Fe-2S]-[ferredoxin]. Its function is as follows. PsaA and PsaB bind P700, the primary electron donor of photosystem I (PSI), as well as the electron acceptors A0, A1 and FX. PSI is a plastocyanin/cytochrome c6-ferredoxin oxidoreductase, converting photonic excitation into a charge separation, which transfers an electron from the donor P700 chlorophyll pair to the spectroscopically characterized acceptors A0, A1, FX, FA and FB in turn. Oxidized P700 is reduced on the lumenal side of the thylakoid membrane by plastocyanin or cytochrome c6. The chain is Photosystem I P700 chlorophyll a apoprotein A1 from Porphyra purpurea (Red seaweed).